A 987-amino-acid chain; its full sequence is Vacuolar membrane protease (987 aa).

Topologically, residues 1-14 (MATRKARNPLAFMP) are cytoplasmic. The chain crosses the membrane as a helical span at residues 15–35 (WPVTILTTAMYLALIIPLLVI). Residues 36–384 (HHNVPPAPRT…AFAVFRLHTL (349 aa)) are Vacuolar-facing. N-linked (GlcNAc...) asparagine glycans are attached at residues asparagine 51 and asparagine 117. Zn(2+)-binding residues include histidine 167 and aspartate 179. Glutamate 213 serves as the catalytic Proton acceptor. Zn(2+) is bound by residues glutamate 214, glutamate 239, and histidine 312. A helical transmembrane segment spans residues 385–405 (FALSVTLLIVAPLTLLVTSVI). Over 406 to 435 (LSRADKMYLFRSSVYSEINDDYIPLRGLRG) the chain is Cytoplasmic. Residues 436–456 (FFRFPFLISIPTGVTVGLAYM) form a helical membrane-spanning segment. Residues 457-466 (VTKVNPFIAH) are Vacuolar-facing. A helical membrane pass occupies residues 467–487 (SSSYAVWSMMISAWIFLAWFV). The Cytoplasmic portion of the chain corresponds to 488–501 (SRVANSARPSAFHR). A helical membrane pass occupies residues 502–522 (VYTWTWMFVLTWSLMVVCTVY). The Vacuolar segment spans residues 523-526 (EHEE). The helical transmembrane segment at 527–547 (GLAGGYFIFFYFAGTFLATWI) threads the bilayer. Residues 548–649 (SYLELFALPT…WSGVLPRWTW (102 aa)) are Cytoplasmic-facing. Residues 572–600 (STQGSRLAASGDEHQDDAAEEDPTESTSL) are disordered. Residues 650–670 (LLQLLITAPVILMLIVPLALL) traverse the membrane as a helical segment. The Vacuolar segment spans residues 671-686 (TTSALSQTGQDGSPQL). The chain crosses the membrane as a helical span at residues 687 to 707 (LIYLFISCLTALLFAPMLPFI). Residues 708–715 (HRYTYHLP) lie on the Cytoplasmic side of the membrane. The chain crosses the membrane as a helical span at residues 716-736 (IFLLFVFIGTMIYNLVAFPFA). Residues 737–987 (DSNRLKLFFL…KRSSLGALGS (251 aa)) are Vacuolar-facing. Residues asparagine 781 and asparagine 871 are each glycosylated (N-linked (GlcNAc...) asparagine).

Belongs to the peptidase M28 family. It depends on Zn(2+) as a cofactor.

It is found in the vacuole membrane. In terms of biological role, may be involved in vacuolar sorting and osmoregulation. The sequence is that of Vacuolar membrane protease from Penicillium rubens (strain ATCC 28089 / DSM 1075 / NRRL 1951 / Wisconsin 54-1255) (Penicillium chrysogenum).